The sequence spans 187 residues: dCTP deaminase, dUMP-forming (187 aa).

DCTP is bound by residues 101-106 (KSSLGR), Asp-119, 127-129 (TLE), Gln-148, Tyr-162, Lys-170, and Gln-174. The Proton donor/acceptor role is filled by Glu-129.

This sequence belongs to the dCTP deaminase family. In terms of assembly, homotrimer.

The enzyme catalyses dCTP + 2 H2O = dUMP + NH4(+) + diphosphate. It functions in the pathway pyrimidine metabolism; dUMP biosynthesis; dUMP from dCTP: step 1/1. In terms of biological role, bifunctional enzyme that catalyzes both the deamination of dCTP to dUTP and the hydrolysis of dUTP to dUMP without releasing the toxic dUTP intermediate. This Corynebacterium diphtheriae (strain ATCC 700971 / NCTC 13129 / Biotype gravis) protein is dCTP deaminase, dUMP-forming.